The chain runs to 502 residues: Mannitol 2-dehydrogenase (502 aa).

NAD(+) is bound at residue 35-46 (IVHVGVGGFHRA).

This sequence belongs to the mannitol dehydrogenase family. Monomer.

The catalysed reaction is D-mannitol + NAD(+) = D-fructose + NADH + H(+). Functionally, catalyzes the NAD(H)-dependent interconversion of D-fructose and D-mannitol in the mannitol metabolic pathway. The sequence is that of Mannitol 2-dehydrogenase from Pyricularia oryzae (strain 70-15 / ATCC MYA-4617 / FGSC 8958) (Rice blast fungus).